Consider the following 250-residue polypeptide: tRNA (guanine-N(1)-)-methyltransferase (250 aa).

S-adenosyl-L-methionine is bound by residues glycine 113 and 133 to 138 (VGDYVL).

It belongs to the RNA methyltransferase TrmD family. As to quaternary structure, homodimer.

It localises to the cytoplasm. The enzyme catalyses guanosine(37) in tRNA + S-adenosyl-L-methionine = N(1)-methylguanosine(37) in tRNA + S-adenosyl-L-homocysteine + H(+). Specifically methylates guanosine-37 in various tRNAs. This is tRNA (guanine-N(1)-)-methyltransferase from Proteus mirabilis (strain HI4320).